The sequence spans 408 residues: Guanine nucleotide-binding protein alpha-14 subunit (408 aa).

Residues H38–K45, G78–S85, N201–K205, V216–T222, D241–Q245, F285–F288, N325–D328, and A380 contribute to the GTP site. The G-alpha domain occupies S70–S408. A G1 motif region spans residues K73–T86. S85 lines the Mg(2+) pocket. The interval D214–T222 is G2 motif. Position 222 (T222) interacts with Mg(2+). The G3 motif stretch occupies residues L237–R246. The segment at L321 to D328 is G4 motif. Residues T378–T383 are G5 motif.

Belongs to the G-alpha family. G proteins are composed of 3 units; alpha, beta and gamma. The alpha chain contains the guanine nucleotide binding site.

Guanine nucleotide-binding proteins (G proteins) are involved as modulators or transducers in various transmembrane signaling systems. This Caenorhabditis briggsae protein is Guanine nucleotide-binding protein alpha-14 subunit (gpa-14).